Consider the following 336-residue polypeptide: Ketol-acid reductoisomerase (NADP(+)) (336 aa).

In terms of domain architecture, KARI N-terminal Rossmann spans 5 to 185 (SKIYTDKDSN…GATRAGVIPT (181 aa)). NADP(+)-binding positions include 28-31 (YGSQ), Ser-56, and 86-89 (DMVQ). Residue His-111 is part of the active site. Position 137 (Gly-137) interacts with NADP(+). A KARI C-terminal knotted domain is found at 186–331 (TFKEETETDL…NQLKDLIQKG (146 aa)). Positions 194, 198, 230, and 234 each coordinate Mg(2+). Position 255 (Ser-255) interacts with substrate.

It belongs to the ketol-acid reductoisomerase family. Requires Mg(2+) as cofactor.

It catalyses the reaction (2R)-2,3-dihydroxy-3-methylbutanoate + NADP(+) = (2S)-2-acetolactate + NADPH + H(+). It carries out the reaction (2R,3R)-2,3-dihydroxy-3-methylpentanoate + NADP(+) = (S)-2-ethyl-2-hydroxy-3-oxobutanoate + NADPH + H(+). It functions in the pathway amino-acid biosynthesis; L-isoleucine biosynthesis; L-isoleucine from 2-oxobutanoate: step 2/4. The protein operates within amino-acid biosynthesis; L-valine biosynthesis; L-valine from pyruvate: step 2/4. Functionally, involved in the biosynthesis of branched-chain amino acids (BCAA). Catalyzes an alkyl-migration followed by a ketol-acid reduction of (S)-2-acetolactate (S2AL) to yield (R)-2,3-dihydroxy-isovalerate. In the isomerase reaction, S2AL is rearranged via a Mg-dependent methyl migration to produce 3-hydroxy-3-methyl-2-ketobutyrate (HMKB). In the reductase reaction, this 2-ketoacid undergoes a metal-dependent reduction by NADPH to yield (R)-2,3-dihydroxy-isovalerate. The sequence is that of Ketol-acid reductoisomerase (NADP(+)) from Saccharolobus islandicus (strain Y.N.15.51 / Yellowstone #2) (Sulfolobus islandicus).